The sequence spans 102 residues: NADH-quinone oxidoreductase subunit K (102 aa).

3 helical membrane-spanning segments follow: residues 5–25, 30–50, and 62–82; these read LTQY…GIIL, IIII…NLVA, and IFAL…LAIL.

This sequence belongs to the complex I subunit 4L family. As to quaternary structure, NDH-1 is composed of 14 different subunits. Subunits NuoA, H, J, K, L, M, N constitute the membrane sector of the complex.

Its subcellular location is the cell inner membrane. The enzyme catalyses a quinone + NADH + 5 H(+)(in) = a quinol + NAD(+) + 4 H(+)(out). NDH-1 shuttles electrons from NADH, via FMN and iron-sulfur (Fe-S) centers, to quinones in the respiratory chain. The immediate electron acceptor for the enzyme in this species is believed to be ubiquinone. Couples the redox reaction to proton translocation (for every two electrons transferred, four hydrogen ions are translocated across the cytoplasmic membrane), and thus conserves the redox energy in a proton gradient. This chain is NADH-quinone oxidoreductase subunit K, found in Beijerinckia indica subsp. indica (strain ATCC 9039 / DSM 1715 / NCIMB 8712).